The primary structure comprises 292 residues: Universal stress protein Mb2346c (292 aa).

It belongs to the universal stress protein A family.

The chain is Universal stress protein Mb2346c from Mycobacterium bovis (strain ATCC BAA-935 / AF2122/97).